We begin with the raw amino-acid sequence, 361 residues long: Chorismate synthase (361 aa).

NADP(+) is bound by residues Arg48 and Arg54. Residues 125–127 (RSS), 238–239 (NA), Gly278, 293–297 (KPTSS), and Arg319 contribute to the FMN site.

This sequence belongs to the chorismate synthase family. As to quaternary structure, homotetramer. Requires FMNH2 as cofactor.

It catalyses the reaction 5-O-(1-carboxyvinyl)-3-phosphoshikimate = chorismate + phosphate. It functions in the pathway metabolic intermediate biosynthesis; chorismate biosynthesis; chorismate from D-erythrose 4-phosphate and phosphoenolpyruvate: step 7/7. In terms of biological role, catalyzes the anti-1,4-elimination of the C-3 phosphate and the C-6 proR hydrogen from 5-enolpyruvylshikimate-3-phosphate (EPSP) to yield chorismate, which is the branch point compound that serves as the starting substrate for the three terminal pathways of aromatic amino acid biosynthesis. This reaction introduces a second double bond into the aromatic ring system. The chain is Chorismate synthase from Escherichia coli (strain K12 / MC4100 / BW2952).